We begin with the raw amino-acid sequence, 170 residues long: Transcription factor E (170 aa).

The region spanning 1–93 (MKEAYLYIVE…TWYVDDDVIR (93 aa)) is the HTH TFE/IIEalpha-type domain.

It belongs to the TFE family. Monomer. Interaction with RNA polymerase subunits RpoF and RpoE is necessary for Tfe stimulatory transcription activity. Able to interact with Tbp and RNA polymerase in the absence of DNA promoter. Interacts both with the preinitiation and elongation complexes.

Its function is as follows. Transcription factor that plays a role in the activation of archaeal genes transcribed by RNA polymerase. Facilitates transcription initiation by enhancing TATA-box recognition by TATA-box-binding protein (Tbp), and transcription factor B (Tfb) and RNA polymerase recruitment. Not absolutely required for transcription in vitro, but particularly important in cases where Tbp or Tfb function is not optimal. It dynamically alters the nucleic acid-binding properties of RNA polymerases by stabilizing the initiation complex and destabilizing elongation complexes. Seems to translocate with the RNA polymerase following initiation and acts by binding to the non template strand of the transcription bubble in elongation complexes. The polypeptide is Transcription factor E (Pyrobaculum neutrophilum (strain DSM 2338 / JCM 9278 / NBRC 100436 / V24Sta) (Thermoproteus neutrophilus)).